The chain runs to 864 residues: Translation initiation factor IF-2 (864 aa).

The tract at residues 1–252 (MEDKNKTIKE…KTSSDKRDFS (252 aa)) is disordered. The span at 78 to 90 (KEVKYEESSRKQD) shows a compositional bias: basic and acidic residues. Residues 106-120 (VRPSGDSSYPVSRSP) show a composition bias toward polar residues. Over residues 150 to 212 (RGPGQGGGYQ…PGNRSGGPGG (63 aa)) the composition is skewed to gly residues. Positions 239 to 252 (HDKEKTSSDKRDFS) are enriched in basic and acidic residues. The region spanning 359–528 (NRPPVVTIMG…LLQAEVMDLK (170 aa)) is the tr-type G domain. A G1 region spans residues 368–375 (GHVDHGKT). Residue 368–375 (GHVDHGKT) coordinates GTP. The segment at 393–397 (GITQH) is G2. The segment at 414-417 (DTPG) is G3. GTP contacts are provided by residues 414–418 (DTPGH) and 468–471 (NKID). Residues 468–471 (NKID) are G4. Residues 504-506 (SAR) are G5.

The protein belongs to the TRAFAC class translation factor GTPase superfamily. Classic translation factor GTPase family. IF-2 subfamily.

It localises to the cytoplasm. One of the essential components for the initiation of protein synthesis. Protects formylmethionyl-tRNA from spontaneous hydrolysis and promotes its binding to the 30S ribosomal subunits. Also involved in the hydrolysis of GTP during the formation of the 70S ribosomal complex. This chain is Translation initiation factor IF-2, found in Leptospira borgpetersenii serovar Hardjo-bovis (strain L550).